A 532-amino-acid polypeptide reads, in one-letter code: Exopolysaccharide phosphotransferase CpsY (532 aa).

The protein belongs to the stealth family.

This is Exopolysaccharide phosphotransferase CpsY (cpsY) from Mycobacterium bovis (strain ATCC BAA-935 / AF2122/97).